The primary structure comprises 335 residues: Dehydration-responsive element-binding protein 2A (335 aa).

Disordered regions lie at residues 1–32 (MAVY…GTTV) and 50–74 (STKK…GPEN). The Nuclear localization signal signature appears at 19–55 (RKRKSRSRGDGTTVAERLKRWKEYNETVEEVSTKKRK). Over residues 52–66 (KKRKVPAKGSKKGCM) the composition is skewed to basic residues. Residues 78-135 (SFRGVRQRIWGKWVAEIREPNRGSRLWLGTFPTAQEAASAYDEAAKAMYGPLARLNFP) constitute a DNA-binding region (AP2/ERF). The interval 279–304 (QDRYPGNSVANGSYRPESQQSGFDPL) is disordered. Residues 286-304 (SVANGSYRPESQQSGFDPL) show a composition bias toward polar residues.

The protein belongs to the AP2/ERF transcription factor family. ERF subfamily. As to quaternary structure, interacts with MED25. Binds to DPB3-1 in the nucleus during heat-stress. Post-translationally, ubiquitinated by DRIP1 and DRIP2. Ubiquitination probably leads to its subsequent degradation, thus negatively regulating response to drought. In terms of tissue distribution, expressed preferentially in roots and stems, and at a lower level in leaves.

It localises to the nucleus. Functionally, transcriptional activator that binds specifically to the DNA sequence 5'-[AG]CCGAC-3'. Binding to the C-repeat/DRE element mediates high salinity- and dehydration-inducible transcription. Promotes the expression of heat stress-inducible genes by contributing to the formation of a heat stress-specific transcriptional complex with NF-Y subunits (e.g. DPB3-1, NF-YA2 and NF-YB3) at the promoter of target genes, thus promoting heat tolerance. The polypeptide is Dehydration-responsive element-binding protein 2A (Arabidopsis thaliana (Mouse-ear cress)).